An 865-amino-acid polypeptide reads, in one-letter code: Catenin alpha-2 (865 aa).

The segment covering 823–839 has biased composition (basic and acidic residues); the sequence is PEKKPLVKREKPEECQT. The tract at residues 823 to 851 is disordered; the sequence is PEKKPLVKREKPEECQTRVRRGSQKKHIS. Residues 840 to 850 are compositionally biased toward basic residues; the sequence is RVRRGSQKKHI.

It belongs to the vinculin/alpha-catenin family.

It localises to the cell membrane. The protein resides in the cytoplasm. The protein localises to the cytoskeleton. Its subcellular location is the cell junction. It is found in the adherens junction. It localises to the cell projection. The protein resides in the axon. The protein localises to the nucleus. Its function is as follows. May function as a linker between cadherin adhesion receptors and the cytoskeleton to regulate cell-cell adhesion and differentiation in the nervous system. In Danio rerio (Zebrafish), this protein is Catenin alpha-2 (Ctnna2).